The chain runs to 72 residues: Conotoxin LiC53 (72 aa).

Residues 1–23 (MEKLTSLLLVAALLMLTQTLIQG) form the signal peptide. The propeptide occupies 24 to 41 (GGEDRPNKKFLQKIKSTA). Disulfide bonds link cysteine 45-cysteine 59, cysteine 52-cysteine 63, and cysteine 58-cysteine 68.

It belongs to the conotoxin O2 superfamily. In terms of tissue distribution, expressed by the venom duct.

Its subcellular location is the secreted. The sequence is that of Conotoxin LiC53 from Conus lividus (Livid cone).